We begin with the raw amino-acid sequence, 278 residues long: UPF0276 protein Swit_4400 (278 aa).

The protein belongs to the UPF0276 family.

This Rhizorhabdus wittichii (strain DSM 6014 / CCUG 31198 / JCM 15750 / NBRC 105917 / EY 4224 / RW1) (Sphingomonas wittichii) protein is UPF0276 protein Swit_4400.